Here is a 244-residue protein sequence, read N- to C-terminus: uncharacterized protein (244 aa).

Belongs to the MtxX family.

This is an uncharacterized protein from Methanocaldococcus jannaschii (strain ATCC 43067 / DSM 2661 / JAL-1 / JCM 10045 / NBRC 100440) (Methanococcus jannaschii).